Here is a 183-residue protein sequence, read N- to C-terminus: uncharacterized protein (183 aa).

The interval 136-183 (EPPASVPSKQSGRSDKKKSTRKSPTFRNRPDFRKNKGRQLNKTTKQKK) is disordered. Basic residues predominate over residues 170–183 (NKGRQLNKTTKQKK).

This is an uncharacterized protein from Homo sapiens (Human).